Reading from the N-terminus, the 233-residue chain is 7-cyano-7-deazaguanine synthase (233 aa).

An ATP-binding site is contributed by 8-18; it reads LSGGLDSTTCM. Positions 186, 194, 197, and 200 each coordinate Zn(2+).

It belongs to the QueC family. Homodimer. It depends on Zn(2+) as a cofactor.

It catalyses the reaction 7-carboxy-7-deazaguanine + NH4(+) + ATP = 7-cyano-7-deazaguanine + ADP + phosphate + H2O + H(+). It functions in the pathway purine metabolism; 7-cyano-7-deazaguanine biosynthesis. Its function is as follows. Catalyzes the ATP-dependent conversion of 7-carboxy-7-deazaguanine (CDG) to 7-cyano-7-deazaguanine (preQ(0)). In Desulfitobacterium hafniense (strain DSM 10664 / DCB-2), this protein is 7-cyano-7-deazaguanine synthase.